A 368-amino-acid polypeptide reads, in one-letter code: MRAEIENYVKKIEQSLELLRRSLDVETSAARLAELEELAASPDLWNDQANAQKLLREKSNLEEQLGAYNKIRSNLKDALELEEMAEAENDLEIMQQVEKDLQSLSTIAAKFETECLFSGEADSNNCFLEINAGAGGTESHDWASIMMRMYLRFAERLGFKTEIINMINGEEAGIKSCTIRIIGRRAYGWLKTEAGVHRLVRISPFNAAGKRMTSFASSWVYPEIDDNIAITIEDKDLRIDTFRASGAGGQHVNTTDSAVRITHIPTGTVTQCQSDRSQHKNKAQAMKMLQAKLYELEMQKRTDSVNEQNAAKTDNSWGHQIRSYVLQPYQMVKDLRTDYETSDTKGVLDGDLEEFVSASLAMNAGSKK.

N5-methylglutamine is present on Gln250.

It belongs to the prokaryotic/mitochondrial release factor family. In terms of processing, methylated by PrmC. Methylation increases the termination efficiency of RF2.

Its subcellular location is the cytoplasm. Its function is as follows. Peptide chain release factor 2 directs the termination of translation in response to the peptide chain termination codons UGA and UAA. The chain is Peptide chain release factor 2 from Rickettsia bellii (strain RML369-C).